The primary structure comprises 227 residues: MARTRRRGMLAIAMLLMLVPLATGCLRVRASITISPDDLVSGEIIAAAKPKNSKDTGPALDGDVPFSQKVAVSNYDSDGYVGSQAVFSDLTFAELPQLANMNSDAAGVNLSLRRNGNIVILEGRADLTSVSDPDADVELTVAFPAAVTSTNGDRIEPEVVQWKLKPGVVSTMSAQARYTDPNTRSFTGAGIWLGIAAFAAAGVVAVLAWIDRDRSPRLTASGDPPTS.

The first 24 residues, 1–24 (MARTRRRGMLAIAMLLMLVPLATG), serve as a signal peptide directing secretion. A lipid anchor (N-palmitoyl cysteine) is attached at C25. The S-diacylglycerol cysteine moiety is linked to residue C25. Residues 26–185 (LRVRASITIS…ARYTDPNTRS (160 aa)) are important for bacterial uptake by host macrophages. Residues 190–210 (GIWLGIAAFAAAGVVAVLAWI) form a helical membrane-spanning segment.

Post-translationally, a shorter form (about 20 kDa) is secreted; upon overexpression of the whole protein in M.smegmatis the C-terminus of the short form is about residue 187, suggesting it is generated by cleavage of the protein before its C-terminal transmembrane domain.

It localises to the membrane. Its subcellular location is the secreted. It is found in the cell wall. Its function is as follows. A putative lipoprotein that seems to be specialized for the initial steps of macrophage infection. A non-acylated fragment (residues 26-185) binds phosphatidyl-myo-inositol mannosides (PIMs). Limits, in a TLR2-dependent fashion, bacterial uptake by host (mouse); this effect may be mediated by nonacylated fragment 26-185. Plays a TLR2-dependent role in host phagosome maturation arrest. Plays a TLR2-independent role in chemokine production during the first 24 hours of mouse infection. This is Protein LppM (lppM) from Mycobacterium tuberculosis (strain ATCC 25618 / H37Rv).